Reading from the N-terminus, the 314-residue chain is Fibrinogen-like protein 1 (314 aa).

The N-terminal stretch at 1 to 22 is a signal peptide; it reads MGEIRSFVLITVALILGKESWV. Residues 28 to 62 adopt a coiled-coil conformation; it reads CLQEQVRLRAQVRQLETRVKQQQVVIAQLLHEKEV. Residues 76-308 enclose the Fibrinogen C-terminal domain; it reads LGGKRHYADC…SVVMKIRPSD (233 aa). Intrachain disulfides connect cysteine 85–cysteine 114 and cysteine 250–cysteine 263.

As to quaternary structure, homodimer. Interacts (via the Fibrinogen C-terminal domain) with LAG3 (via Ig-like domains 1 and 2).

It is found in the secreted. Its function is as follows. Immune suppressive molecule that inhibits antigen-specific T-cell activation by acting as a major ligand of LAG3. Responsible for LAG3 T-cell inhibitory function. Binds LAG3 independently from MHC class II (MHC-II). Secreted by, and promotes growth of, hepatocytes. The chain is Fibrinogen-like protein 1 from Rattus norvegicus (Rat).